The sequence spans 1059 residues: Mitogen-activated protein kinase kinase kinase mlk-1 (1059 aa).

The tract at residues 1-66 (MEQASVPSYV…ESSQVSRESP (66 aa)) is disordered. Residues 38–48 (DTTTASTSTDS) are compositionally biased toward low complexity. The 62-residue stretch at 69-130 (RASKAFVASY…PSNYAREVTY (62 aa)) folds into the SH3 domain. A Protein kinase domain is found at 150-454 (TLSDCQIGHG…TLAISFKQYA (305 aa)). Residues 156–164 (IGHGATATV) and lysine 193 contribute to the ATP site. The stretch at 199–224 (ASNFRADVVSTDEQLEQLKREANLVN) forms a coiled coil. Aspartate 297 functions as the Proton acceptor in the catalytic mechanism. Serine 355 is modified (phosphoserine; by max-2 and tpa-1). Disordered stretches follow at residues 617–699 (PVVS…QTTR) and 714–808 (RAQS…SSSD). The span at 623–633 (MDDSNTFSTID) shows a compositional bias: polar residues. Composition is skewed to basic and acidic residues over residues 639-648 (DPNHSKESKK) and 662-674 (NKRDSKEDHDERA). The segment covering 678–689 (SISSRSSSTTSS) has biased composition (low complexity). Residues 690 to 699 (NRLITGQTTR) show a composition bias toward polar residues. Residues 749–759 (RYVKDLEKDTP) are compositionally biased toward basic and acidic residues. Polar residues-rich tracts occupy residues 774 to 790 (LDQTIPASPNSPDSINN) and 798 to 808 (SRRTTANSSSD). The short motif at 937–940 (NPQY) is the NPQY motif element. Tyrosine 940 is subject to Phosphotyrosine.

This sequence belongs to the protein kinase superfamily. STE Ser/Thr protein kinase family. MAP kinase kinase kinase subfamily. As to quaternary structure, interacts with max-2; the interaction is independent of max-2 and mlk-1 kinase activities. May interact (via NPQY motif when phosphorylated on tyrosine residue) with shc-1 (via PID domain); the interaction may facilitate mek-1 phosphorylation by bringing mlk-1 and mek-1 together. Interacts with svh-2 (via cytoplasmic domain). Interacts with tpa-1. It depends on Mg(2+) as a cofactor. In terms of processing, may be phosphorylated on tyrosine residues by svh-2. May be ubiquitinated and targeted for proteasomal degradation by E3 ubiquitin ligase rpm-1. As to expression, expressed in pharynx, intestine, hypodermis, neurons and body muscles.

It carries out the reaction L-seryl-[protein] + ATP = O-phospho-L-seryl-[protein] + ADP + H(+). The enzyme catalyses L-threonyl-[protein] + ATP = O-phospho-L-threonyl-[protein] + ADP + H(+). Its activity is regulated as follows. Activated by phosphorylation at Ser-355. May be activated by svh-2-mediated phosphorylation. Its function is as follows. Serine/threonine-protein kinase which, by phosphorylating and activating mek-1, plays an important role in the activation of the JNK pathway composed of mlk-1, mek-1 and kgb-1. Involved in the response to environmental stress such as heavy metals. By activating the JNK pathway downstream of tyrosine receptor svh-2, plays a role in axon regeneration after injury. This is Mitogen-activated protein kinase kinase kinase mlk-1 from Caenorhabditis elegans.